The sequence spans 293 residues: Energy-coupling factor transporter ATP-binding protein EcfA2 (293 aa).

One can recognise an ABC transporter domain in the interval 3–246 (ITFQKVEHRY…ADELEKIGVD (244 aa)). ATP is bound at residue 40 to 47 (GHTGSGKS).

The protein belongs to the ABC transporter superfamily. Energy-coupling factor EcfA family. Forms a stable energy-coupling factor (ECF) transporter complex composed of 2 membrane-embedded substrate-binding proteins (S component), 2 ATP-binding proteins (A component) and 2 transmembrane proteins (T component).

The protein resides in the cell membrane. In terms of biological role, ATP-binding (A) component of a common energy-coupling factor (ECF) ABC-transporter complex. Unlike classic ABC transporters this ECF transporter provides the energy necessary to transport a number of different substrates. The sequence is that of Energy-coupling factor transporter ATP-binding protein EcfA2 from Bacillus anthracis.